The following is an 86-amino-acid chain: Precursor of CEP4 (86 aa).

The first 30 residues, 1–30 (MVSRGCSITVLFRFLIVLLVIQVHFENTKA), serve as a signal peptide directing secretion. The propeptide occupies 31–64 (ARHAPVVSWSPPEPPKDDFVWYHKINRFKNIEQD). The interval 63–86 (QDAFRPTHQGPSQGIGHKNPPGAP) is disordered. Residues P68 and P73 each carry the hydroxyproline modification. A propeptide spanning residues 80 to 86 (KNPPGAP) is cleaved from the precursor.

Belongs to the C-terminally encoded plant signaling peptide (CEP) family. Interacts with CEP receptors (e.g. CEPR1 and CEPR2). In terms of processing, the mature small signaling peptide is generated by proteolytic processing of the longer precursor. In terms of tissue distribution, expressed at low levels in flowers. Present in lateral roots, shoot apical meristem (SAM), flowers and siliques.

Its subcellular location is the secreted. It localises to the extracellular space. The protein resides in the apoplast. In terms of biological role, extracellular signaling peptide that represses primary root growth rate. Promotes shoot growth and modulates leaf morphology. Regulates systemic nitrogen (N)-demand signaling. Mediates up-regulation of genes involved in N uptake and assimilation pathways. This chain is Precursor of CEP4, found in Arabidopsis thaliana (Mouse-ear cress).